A 309-amino-acid chain; its full sequence is Putative proline iminopeptidase (309 aa).

Positions 33-291 (LYVHGGPGSG…LYVTNNAGHS (259 aa)) constitute an AB hydrolase-1 domain. Serine 105 serves as the catalytic Nucleophile. Aspartate 262 is a catalytic residue. Histidine 290 serves as the catalytic Proton donor.

The protein belongs to the peptidase S33 family.

It localises to the cytoplasm. It catalyses the reaction Release of N-terminal proline from a peptide.. Functionally, specifically catalyzes the removal of N-terminal proline residues from peptides. The chain is Putative proline iminopeptidase (pip) from Mycoplasma pneumoniae (strain ATCC 29342 / M129 / Subtype 1) (Mycoplasmoides pneumoniae).